The primary structure comprises 93 residues: MARSVKKGPFIDDHLMKKITKLNSENQKKPFKTWSRRSTIFPDMVGHTVMVHNGKQFTPVYINENMIGHKLGEFSPTRTFRAHVAGDKKAAKK.

It belongs to the universal ribosomal protein uS19 family.

Its function is as follows. Protein S19 forms a complex with S13 that binds strongly to the 16S ribosomal RNA. In Leptospira interrogans serogroup Icterohaemorrhagiae serovar copenhageni (strain Fiocruz L1-130), this protein is Small ribosomal subunit protein uS19.